The sequence spans 1357 residues: Mediator of RNA polymerase II transcription subunit 13 (1357 aa).

Disordered regions lie at residues 356 to 391 and 420 to 487; these read SCNYGPASRTKLTPSKAQDLRRSAAPLSADSFGNGF and DLWN…HRKE. Residues 435 to 451 show a composition bias toward polar residues; sequence INPTSQQGDSARITSGS.

It belongs to the Mediator complex subunit 13 family. Component of the SRB8-11 complex, which itself associates with the Mediator complex.

The protein localises to the nucleus. Functionally, component of the SRB8-11 complex. The SRB8-11 complex is a regulatory module of the Mediator complex which is itself involved in regulation of basal and activated RNA polymerase II-dependent transcription. The SRB8-11 complex may be involved in the transcriptional repression of a subset of genes regulated by Mediator. It may inhibit the association of the Mediator complex with RNA polymerase II to form the holoenzyme complex. In Eremothecium gossypii (strain ATCC 10895 / CBS 109.51 / FGSC 9923 / NRRL Y-1056) (Yeast), this protein is Mediator of RNA polymerase II transcription subunit 13 (SSN2).